The primary structure comprises 652 residues: MGIVVLTMKASVIEMFLVLLVTGIQSNQEMTKKMKRPKFTVPQISCDVRAGKITNVEFIVKCPPGCQDPRYHVYGADVYASYSSVCGAAVHSGVLDNSGGKILVRKVAGQSGYKGSYSNGVQSLSLPRWRESFVVSEGKPQKGVTYPSSLTYSSSKSPAAKAGETARADQSPPVPGTAAQPVTVTQAPGTTAIEATHTTLPKPSPSAGSTASGLRPQPAGQRSKDLGEPALWKPESVLLDAGFVPKEELSTQSLEPASQGDPSCKVDLSFLIDGSSSIGKRRFRIQKQFLTDVAQTLDIGPAGPLMGVVQYGDNPATQFNLKTHMNSQDVKAAIEKISQRGGLSNAGRAISFVTKNFFSKFNGNRGGAPNVAVVMVDGWPTDKVEEASRLARESGVNIFFITIEGASENEKQYMLEPNFANKAVCRTNGFYSLTVQNWFSLHKTVQPLVKRVCDTDRLACSKTCLNSADIGFVIDGSSSVGTSNFRTVLQFVANLSREFEISDMDTRIGAMQYTYEQRLEFGFDEYSTKSDVLNAIKRVGYWSGGTSTGAAIHYALEQLFKKSKPNKRKLMILITDGRSYDDIRIPAMLAHHKGVITYAIGVAWAAQDELDIIATHPARDHAFFVDEFDNLYKVVPKVIQNICTEFNSQPRN.

The N-terminal stretch at 1–26 (MGIVVLTMKASVIEMFLVLLVTGIQS) is a signal peptide. Positions 40–133 (TVPQISCDVR…LSLPRWRESF (94 aa)) constitute an LCCL domain. 2 disulfides stabilise this stretch: C46–C62 and C66–C86. 2 disordered regions span residues 137–181 (EGKP…AAQP) and 196–231 (THTT…EPAL). The span at 145 to 158 (TYPSSLTYSSSKSP) shows a compositional bias: low complexity. Residues 196 to 212 (THTTLPKPSPSAGSTAS) are compositionally biased toward polar residues. VWFA domains are found at residues 267–452 (DLSF…VKRV) and 469–638 (DIGF…VPKV). N-linked (GlcNAc...) asparagine glycosylation occurs at N494.

As to quaternary structure, binds dermatan sulfate and chondroitin sulfate.

The protein localises to the secreted. It is found in the extracellular space. The protein resides in the extracellular matrix. Promotes matrix assembly and cell adhesiveness. Plays a role in spinal cord formation by regulating the proliferation and differentiation of neural stem cells. The protein is Vitrin (VIT) of Bos taurus (Bovine).